Consider the following 463-residue polypeptide: Interstitial collagenase B (463 aa).

A signal peptide spans 1 to 17 (MPSLPLLLRLWAASSYS). A propeptide spans 18-96 (FPVIQDGLQK…PRCGVPDVAP (79 aa)) (activation peptide). Residues 87–94 (PRCGVPDV) carry the Cysteine switch motif. Residue cysteine 89 participates in Zn(2+) binding. The segment at 95–273 (APYAITHNNP…PIQLTDATLD (179 aa)) is metalloprotease. Position 155 (aspartate 155) interacts with Ca(2+). Zn(2+)-binding residues include histidine 165 and aspartate 167. Ca(2+) is bound by residues aspartate 172 and glycine 173. Histidine 180 is a binding site for Zn(2+). Residues glycine 187 and glycine 189 each coordinate Ca(2+). A Zn(2+)-binding site is contributed by histidine 193. Ca(2+) is bound at residue aspartate 195. Histidine 215 serves as a coordination point for Zn(2+). Glutamate 216 is a catalytic residue. 2 residues coordinate Zn(2+): histidine 219 and histidine 225. A disulfide bond links cysteine 275 and cysteine 463. Hemopexin repeat units follow at residues 278–321 (GLTF…WPNL) and 322–368 (PGKF…FGFP). Aspartate 282 is a binding site for Ca(2+). An N-linked (GlcNAc...) asparagine glycan is attached at asparagine 370. 2 Hemopexin repeats span residues 371–419 (VTNI…FPGI) and 420–463 (DYKV…WFNC). Ca(2+) is bound by residues aspartate 375 and aspartate 424.

Belongs to the peptidase M10A family. Ca(2+) is required as a cofactor. The cofactor is Zn(2+).

It is found in the secreted. Its subcellular location is the extracellular space. The protein resides in the extracellular matrix. The catalysed reaction is Cleavage of the triple helix of collagen at about three-quarters of the length of the molecule from the N-terminus, at 775-Gly-|-Ile-776 in the alpha1(I) chain. Cleaves synthetic substrates and alpha-macroglobulins at bonds where P1' is a hydrophobic residue.. With respect to regulation, can be activated without removal of the activation peptide. This is Interstitial collagenase B (Mmp1b) from Mus musculus (Mouse).